Here is a 259-residue protein sequence, read N- to C-terminus: Proliferating cell nuclear antigen (259 aa).

Residues 61–80 (RCDRNIALGVNLTSLTKVLR) mediate DNA binding. Lysine 164 is covalently cross-linked (Glycyl lysine isopeptide (Lys-Gly) (interchain with G-Cter in SUMO); alternate). Lysine 164 is covalently cross-linked (Glycyl lysine isopeptide (Lys-Gly) (interchain with G-Cter in ubiquitin); alternate).

Belongs to the PCNA family. In terms of assembly, homotrimer. Monoubiquitinated on Lys-164 upon DNA damage, and then polyubiquitinated through 'Lys-63'-linkage.

It localises to the nucleus. Its function is as follows. This protein is an auxiliary protein of DNA polymerase delta and is involved in the control of eukaryotic DNA replication by increasing the polymerase's processibility during elongation of the leading strand. Involved in DNA repair. The polypeptide is Proliferating cell nuclear antigen (Chaetomium thermophilum (strain DSM 1495 / CBS 144.50 / IMI 039719) (Thermochaetoides thermophila)).